Consider the following 448-residue polypeptide: Chromosomal replication initiator protein DnaA (448 aa).

The domain I, interacts with DnaA modulators stretch occupies residues 1–73; that stretch reads MSTHLTETWE…VNALKLLTSK (73 aa). A domain II region spans residues 73 to 109; it reads KKYNIDFIVTTEEKIEENEKNHNNEKSNIVVNDEMST. The interval 110 to 326 is domain III, AAA+ region; that stretch reads MLNPKYTFDS…GALIRIVAFS (217 aa). ATP-binding residues include glycine 154, glycine 156, lysine 157, and threonine 158. Positions 327–448 are domain IV, binds dsDNA; it reads SLTNKEISVD…NELNKRINQK (122 aa).

This sequence belongs to the DnaA family. As to quaternary structure, oligomerizes as a right-handed, spiral filament on DNA at oriC.

The protein resides in the cytoplasm. Plays an essential role in the initiation and regulation of chromosomal replication. ATP-DnaA binds to the origin of replication (oriC) to initiate formation of the DNA replication initiation complex once per cell cycle. Binds the DnaA box (a 9 base pair repeat at the origin) and separates the double-stranded (ds)DNA. Forms a right-handed helical filament on oriC DNA; dsDNA binds to the exterior of the filament while single-stranded (ss)DNA is stabiized in the filament's interior. The ATP-DnaA-oriC complex binds and stabilizes one strand of the AT-rich DNA unwinding element (DUE), permitting loading of DNA polymerase. After initiation quickly degrades to an ADP-DnaA complex that is not apt for DNA replication. Binds acidic phospholipids. The chain is Chromosomal replication initiator protein DnaA from Clostridium botulinum (strain 657 / Type Ba4).